The chain runs to 247 residues: Probable transcriptional regulatory protein plu2109 (247 aa).

Belongs to the TACO1 family.

It is found in the cytoplasm. The sequence is that of Probable transcriptional regulatory protein plu2109 from Photorhabdus laumondii subsp. laumondii (strain DSM 15139 / CIP 105565 / TT01) (Photorhabdus luminescens subsp. laumondii).